An 86-amino-acid chain; its full sequence is MLRLVLLLLATDFAASDDSLDSSDSQLIKRSQFRTPDCHRFDYPVCSKHLSPVCGTDMNTYGNECTLCMKIREDGSHINIIKDEPC.

The signal sequence occupies residues 1–16 (MLRLVLLLLATDFAAS). Residues 32-86 (QFRTPDCHRFDYPVCSKHLSPVCGTDMNTYGNECTLCMKIREDGSHINIIKDEPC) form the Kazal-like domain. Disulfide bonds link Cys38-Cys68, Cys46-Cys65, and Cys54-Cys86.

The protein localises to the secreted. It is found in the cytoplasmic vesicle. Its subcellular location is the secretory vesicle. It localises to the acrosome. As a strong inhibitor of acrosin, it is required for normal spermiogenesis. It probably hinders premature activation of proacrosin and other proteases, thus preventing the cascade of events leading to spermiogenesis defects. May be involved in the regulation of serine protease-dependent germ cell apoptosis. It also inhibits trypsin. The chain is Serine protease inhibitor Kazal-type 2 (Spink2) from Rattus norvegicus (Rat).